Consider the following 148-residue polypeptide: Large ribosomal subunit protein bL9 (148 aa).

The protein belongs to the bacterial ribosomal protein bL9 family.

In terms of biological role, binds to the 23S rRNA. The sequence is that of Large ribosomal subunit protein bL9 from Staphylococcus aureus (strain bovine RF122 / ET3-1).